The sequence spans 313 residues: Protoheme IX farnesyltransferase (313 aa).

8 helical membrane-spanning segments follow: residues 34-54 (VIELLLVTTIPAMLLADRGTV), 56-76 (PLLIINTLVGGLLAAAGANTL), 105-125 (HALIFGLTLSVASFFWLWSTT), 128-148 (LSAHLAGATIAFYVLVYTLLL), 152-172 (TSQNVVWGGAAGCMPVMIGWS), 173-193 (AVTGTIQWPALVMFLIIFFWT), 237-257 (VLATLALALTTGWLYASVAIL), and 291-311 (YLAVVFVALAVDSALALPTLL).

This sequence belongs to the UbiA prenyltransferase family. Protoheme IX farnesyltransferase subfamily.

Its subcellular location is the cell membrane. The catalysed reaction is heme b + (2E,6E)-farnesyl diphosphate + H2O = Fe(II)-heme o + diphosphate. It functions in the pathway porphyrin-containing compound metabolism; heme O biosynthesis; heme O from protoheme: step 1/1. Functionally, converts heme B (protoheme IX) to heme O by substitution of the vinyl group on carbon 2 of heme B porphyrin ring with a hydroxyethyl farnesyl side group. The polypeptide is Protoheme IX farnesyltransferase (Mycolicibacterium gilvum (strain PYR-GCK) (Mycobacterium gilvum (strain PYR-GCK))).